Here is a 295-residue protein sequence, read N- to C-terminus: Aspartate carbamoyltransferase catalytic subunit (295 aa).

Residues R49 and T50 each contribute to the carbamoyl phosphate site. K77 is a binding site for L-aspartate. Residues R99, H127, and Q130 each coordinate carbamoyl phosphate. 2 residues coordinate L-aspartate: R161 and R212. Carbamoyl phosphate is bound by residues G251 and P252.

It belongs to the aspartate/ornithine carbamoyltransferase superfamily. ATCase family. Heterododecamer (2C3:3R2) of six catalytic PyrB chains organized as two trimers (C3), and six regulatory PyrI chains organized as three dimers (R2).

The catalysed reaction is carbamoyl phosphate + L-aspartate = N-carbamoyl-L-aspartate + phosphate + H(+). Its pathway is pyrimidine metabolism; UMP biosynthesis via de novo pathway; (S)-dihydroorotate from bicarbonate: step 2/3. In terms of biological role, catalyzes the condensation of carbamoyl phosphate and aspartate to form carbamoyl aspartate and inorganic phosphate, the committed step in the de novo pyrimidine nucleotide biosynthesis pathway. In Campylobacter jejuni subsp. jejuni serotype O:2 (strain ATCC 700819 / NCTC 11168), this protein is Aspartate carbamoyltransferase catalytic subunit.